The following is a 176-amino-acid chain: Cell division control protein 31 (176 aa).

Residues 1–12 (MFANARAKRRSR) are compositionally biased toward basic residues. Residues 1–21 (MFANARAKRRSRASSPTPARL) form a disordered region. 4 consecutive EF-hand domains span residues 34–69 (EQRQ…LGFN), 70–105 (AEKS…KIVE), 107–142 (DPLE…LNEN), and 143–176 (IDDQ…MDEA). Ca(2+)-binding residues include Asp-47, Asp-49, Asp-51, and Glu-58. Residues Asp-156, Asp-158, Asp-160, Glu-162, and Glu-167 each contribute to the Ca(2+) site.

It belongs to the centrin family. As to quaternary structure, component of the spindle pole body (SPB), acting as the connector of microtubule arrays in the cytoplasm and the nucleoplasm, is involved in nuclear positioning before chromosome segregation, SPB separation, spindle formation, chromosome segregation, nuclear migration into the bud, nuclear reorientation after cytokinesis and nuclear fusion during conjugation. The SPB half-bridge, which is tightly associated with the cytoplasmic side of the nuclear envelope and the SPB, is playing a key role as the starting structure for and in the initiation of SPB duplication in G1. Within the complex, interacts with sad1.

It is found in the nucleus. In terms of biological role, required for the proper coordination between exit from mitosis and the initiation of septation. Has a role in bipolar spindle formation during spindle pole body (SPB) duplication. Required for the localization of sad1 to the SPB. The polypeptide is Cell division control protein 31 (cdc31) (Schizosaccharomyces pombe (strain 972 / ATCC 24843) (Fission yeast)).